The following is a 481-amino-acid chain: Protein FIZZY-RELATED 3 (481 aa).

Positions 100–165 (PAGGQGSASS…RKVPKTPHKV (66 aa)) are disordered. Over residues 125-136 (SNSSPSSPFSPS) the composition is skewed to low complexity. Over residues 154–163 (PPRKVPKTPH) the composition is skewed to basic residues. WD repeat units follow at residues 172 to 209 (QDDF…VTKL), 213 to 252 (GPND…RVRT), 255 to 292 (GHQT…DFVS), 296 to 335 (GHKS…PILK), 338 to 380 (EHTA…QLNS), 382 to 423 (DTGS…KVAT), and 426 to 465 (GHSM…KMQT).

The protein belongs to the WD repeat CDC20/Fizzy family. As to quaternary structure, associates with the APC/C complex. Interacts with CDC20-1, CDC20-2, CYCA1-1, CYCA3-4, CYCB1-1 and CYCB1-2. Binds to GIG1 and PYM.

Its pathway is protein modification; protein ubiquitination. Its function is as follows. Activator protein that regulates the ubiquitin ligase activity and substrate specificity of the anaphase promoting complex/cyclosome (APC/C). The protein is Protein FIZZY-RELATED 3 (FZR3) of Arabidopsis thaliana (Mouse-ear cress).